The sequence spans 244 residues: UDP-2,3-diacylglucosamine hydrolase (244 aa).

Mn(2+) contacts are provided by Asp8, His10, Asp41, Asn79, and His114. 79-80 (NR) lines the substrate pocket. Asp122, Ser160, Asn164, Lys167, and His195 together coordinate substrate. His195 and His197 together coordinate Mn(2+).

This sequence belongs to the LpxH family. It depends on Mn(2+) as a cofactor.

It is found in the cell inner membrane. It carries out the reaction UDP-2-N,3-O-bis[(3R)-3-hydroxytetradecanoyl]-alpha-D-glucosamine + H2O = 2-N,3-O-bis[(3R)-3-hydroxytetradecanoyl]-alpha-D-glucosaminyl 1-phosphate + UMP + 2 H(+). The protein operates within glycolipid biosynthesis; lipid IV(A) biosynthesis; lipid IV(A) from (3R)-3-hydroxytetradecanoyl-[acyl-carrier-protein] and UDP-N-acetyl-alpha-D-glucosamine: step 4/6. Its function is as follows. Hydrolyzes the pyrophosphate bond of UDP-2,3-diacylglucosamine to yield 2,3-diacylglucosamine 1-phosphate (lipid X) and UMP by catalyzing the attack of water at the alpha-P atom. Involved in the biosynthesis of lipid A, a phosphorylated glycolipid that anchors the lipopolysaccharide to the outer membrane of the cell. The polypeptide is UDP-2,3-diacylglucosamine hydrolase (Marinobacter nauticus (strain ATCC 700491 / DSM 11845 / VT8) (Marinobacter aquaeolei)).